We begin with the raw amino-acid sequence, 288 residues long: MKGSTVHTKWQAYCRLMRIDKPIGSLLLLWPTLWALWLAGRGIPEAKILVVFVLGVFFMRAAGCVVNDYADRHIDSFVKRTASRPLPSGTISEKESKILFVVLILLSFGLVLTLNSMTIWLSLAALALAWIYPFMKRVTHLPQVVLGAAFGWSIPMGFAAVSESLPLVCWLLLLANICWTVAYDTQYAMVDRDDDLRIGVKSTAILFGQHDKLIIGLLQLATLLLMVAIGWLMNLGGAFYWSILLAGALFTHQQKMIAQREREPCFRAFLNNNYVGLVLFLGILISYW.

Helical transmembrane passes span 23–43 (IGSLLLLWPTLWALWLAGRGI), 46–66 (AKILVVFVLGVFFMRAAGCVV), 98–118 (ILFVVLILLSFGLVLTLNSMT), 141–161 (LPQVVLGAAFGWSIPMGFAAV), 163–183 (ESLPLVCWLLLLANICWTVAY), 213–233 (LIIGLLQLATLLLMVAIGWLM), 234–254 (NLGGAFYWSILLAGALFTHQQ), and 268–288 (AFLNNNYVGLVLFLGILISYW).

Belongs to the UbiA prenyltransferase family. The cofactor is Mg(2+).

It is found in the cell inner membrane. It carries out the reaction all-trans-octaprenyl diphosphate + 4-hydroxybenzoate = 4-hydroxy-3-(all-trans-octaprenyl)benzoate + diphosphate. It functions in the pathway cofactor biosynthesis; ubiquinone biosynthesis. Its function is as follows. Catalyzes the prenylation of para-hydroxybenzoate (PHB) with an all-trans polyprenyl group. Mediates the second step in the final reaction sequence of ubiquinone-8 (UQ-8) biosynthesis, which is the condensation of the polyisoprenoid side chain with PHB, generating the first membrane-bound Q intermediate 3-octaprenyl-4-hydroxybenzoate. In Yersinia pseudotuberculosis serotype IB (strain PB1/+), this protein is 4-hydroxybenzoate octaprenyltransferase.